The chain runs to 417 residues: Gamma-glutamyl phosphate reductase (417 aa).

It belongs to the gamma-glutamyl phosphate reductase family.

It localises to the cytoplasm. The enzyme catalyses L-glutamate 5-semialdehyde + phosphate + NADP(+) = L-glutamyl 5-phosphate + NADPH + H(+). Its pathway is amino-acid biosynthesis; L-proline biosynthesis; L-glutamate 5-semialdehyde from L-glutamate: step 2/2. Functionally, catalyzes the NADPH-dependent reduction of L-glutamate 5-phosphate into L-glutamate 5-semialdehyde and phosphate. The product spontaneously undergoes cyclization to form 1-pyrroline-5-carboxylate. The chain is Gamma-glutamyl phosphate reductase from Desulfitobacterium hafniense (strain DSM 10664 / DCB-2).